The sequence spans 284 residues: NADH-cytochrome b5 reductase 1 (284 aa).

The chain crosses the membrane as a helical span at residues 8-28 (PLFVFSTIAIIISTFVIFYFV). Positions 41-144 (DTFQKFPLIE…RGPKGFFTYT (104 aa)) constitute an FAD-binding FR-type domain. Residues 124–139 (DSKK…GPKG) and 150–182 (SFGM…KISL) each bind FAD.

This sequence belongs to the flavoprotein pyridine nucleotide cytochrome reductase family. Monomer. Component of the 2-(3-amino-3-carboxypropyl)histidine synthase complex composed of DPH1, DPH2, DPH3 and a NADH-dependent reductase, predominantly CBR1. Requires FAD as cofactor.

It is found in the mitochondrion outer membrane. It catalyses the reaction 2 Fe(III)-[cytochrome b5] + NADH = 2 Fe(II)-[cytochrome b5] + NAD(+) + H(+). The enzyme catalyses 2 Fe(3+)-[Dph3] + NADH = 2 Fe(2+)-[Dph3] + NAD(+) + H(+). The protein operates within protein modification; peptidyl-diphthamide biosynthesis. Functionally, NADH-dependent reductase for DPH3 and cytochrome b5. Required for the first step of diphthamide biosynthesis, a post-translational modification of histidine which occurs in elongation factor 2. DPH1 and DPH2 transfer a 3-amino-3-carboxypropyl (ACP) group from S-adenosyl-L-methionine (SAM) to a histidine residue, the reaction is assisted by a reduction system comprising DPH3 and a NADH-dependent reductase, predominantly CBR1. By reducing DPH3, also involved in the formation of the tRNA wobble base modification mcm5s 2U (5-methoxycarbonylmethyl-2-thiouridine), mediated by the elongator complex. The cytochrome b5/NADH cytochrome b5 reductase electron transfer system supports the catalytic activity of several sterol biosynthetic enzymes. The polypeptide is NADH-cytochrome b5 reductase 1 (CBR1) (Scheffersomyces stipitis (strain ATCC 58785 / CBS 6054 / NBRC 10063 / NRRL Y-11545) (Yeast)).